Consider the following 92-residue polypeptide: Small ribosomal subunit protein uS19 (92 aa).

Belongs to the universal ribosomal protein uS19 family.

In terms of biological role, protein S19 forms a complex with S13 that binds strongly to the 16S ribosomal RNA. The polypeptide is Small ribosomal subunit protein uS19 (rpsS) (Rickettsia prowazekii (strain Madrid E)).